The chain runs to 356 residues: Histidine biosynthesis bifunctional protein HisB (356 aa).

The interval 1-166 is histidinol-phosphatase; the sequence is MSKKVLFIDR…AICNYLTSLN (166 aa). The Nucleophile role is filled by Asp-9. Mg(2+)-binding residues include Asp-9 and Asp-11. Residue Asp-11 is the Proton donor of the active site. The Zn(2+) site is built by Cys-93, His-95, Cys-101, and Cys-103. A Mg(2+)-binding site is contributed by Asp-130. Residues 167-356 are imidazoleglycerol-phosphate dehydratase; the sequence is RYAHVKRITK…VLPSSKGVLS (190 aa).

This sequence in the N-terminal section; belongs to the histidinol-phosphatase family. It in the C-terminal section; belongs to the imidazoleglycerol-phosphate dehydratase family. Mg(2+) serves as cofactor. The cofactor is Zn(2+).

Its subcellular location is the cytoplasm. It carries out the reaction D-erythro-1-(imidazol-4-yl)glycerol 3-phosphate = 3-(imidazol-4-yl)-2-oxopropyl phosphate + H2O. The enzyme catalyses L-histidinol phosphate + H2O = L-histidinol + phosphate. Its pathway is amino-acid biosynthesis; L-histidine biosynthesis; L-histidine from 5-phospho-alpha-D-ribose 1-diphosphate: step 6/9. It participates in amino-acid biosynthesis; L-histidine biosynthesis; L-histidine from 5-phospho-alpha-D-ribose 1-diphosphate: step 8/9. The protein is Histidine biosynthesis bifunctional protein HisB of Baumannia cicadellinicola subsp. Homalodisca coagulata.